A 622-amino-acid chain; its full sequence is Interleukin-1 receptor-associated kinase-like 2 (622 aa).

In terms of domain architecture, Death spans 13–94; sequence LDDLCRNIDT…RAAQIVLSWK (82 aa). The Protein kinase domain occupies 208–473; sequence FDQSHRISEG…LPEACEEAWA (266 aa). ATP is bound by residues 214-222, Lys235, and 335-338; these read ISEGTFADI and KSAN. Disordered stretches follow at residues 511-532 and 553-591; these read RVSE…VDNS and LFTG…ETSW. Polar residues-rich tracts occupy residues 513 to 523 and 561 to 590; these read SEATGSSSNTP and QPST…TETS.

Belongs to the protein kinase superfamily. TKL Ser/Thr protein kinase family. Pelle subfamily. As to quaternary structure, interacts with MYD88. IL-1 stimulation leads to the formation of a signaling complex which dissociates from the IL-1 receptor following the binding of PELI1. Ubiquitously expressed, with a higher expression observed in brain, spleen and liver. Isoform 1 and isoform 2 are considered agonist and isoform 3 and isoform 4 are considered antagonist.

In terms of biological role, binds to the IL-1 type I receptor following IL-1 engagement, triggering intracellular signaling cascades leading to transcriptional up-regulation and mRNA stabilization. This chain is Interleukin-1 receptor-associated kinase-like 2 (Irak2), found in Mus musculus (Mouse).